The following is a 66-amino-acid chain: Large ribosomal subunit protein bL31 (66 aa).

4 residues coordinate Zn(2+): cysteine 16, cysteine 18, cysteine 36, and cysteine 39.

It belongs to the bacterial ribosomal protein bL31 family. Type A subfamily. Part of the 50S ribosomal subunit. Zn(2+) is required as a cofactor.

In terms of biological role, binds the 23S rRNA. The polypeptide is Large ribosomal subunit protein bL31 (Trichlorobacter lovleyi (strain ATCC BAA-1151 / DSM 17278 / SZ) (Geobacter lovleyi)).